Here is a 282-residue protein sequence, read N- to C-terminus: DNA-3-methyladenine glycosylase 2 (282 aa).

Asp-238 acts as the Proton acceptor in catalysis.

This sequence belongs to the alkylbase DNA glycosidase AlkA family. In terms of assembly, monomer.

The catalysed reaction is Hydrolysis of alkylated DNA, releasing 3-methyladenine, 3-methylguanine, 7-methylguanine and 7-methyladenine.. In terms of biological role, hydrolysis of the deoxyribose N-glycosidic bond to excise 3-methyladenine, 3-methylguanine, 7-methylguanine, O2-methylthymine, and O2-methylcytosine from the damaged DNA polymer formed by alkylation lesions. In Escherichia coli (strain K12), this protein is DNA-3-methyladenine glycosylase 2 (alkA).